A 631-amino-acid chain; its full sequence is Quinoprotein alcohol dehydrogenase PedE (631 aa).

Positions 1 to 33 (MTIRSLPALSPLALSVRVLLMAGSLALGNVATA) are cleaved as a signal peptide. Ca(2+) is bound by residues aspartate 53, threonine 56, and aspartate 59. Glutamate 103 provides a ligand contact to pyrroloquinoline quinone. Cysteine 147 and cysteine 148 are disulfide-bonded. Pyrroloquinoline quinone is bound by residues arginine 153, threonine 197, and 215–217 (HGS). Ca(2+) is bound at residue glutamate 221. Positions 250–286 (GRLNGKDSTPTGDVKAPSWPDDPTTETGKVEAWSHGG) are disordered. Residues asparagine 308 and aspartate 358 each coordinate Ca(2+). Residue aspartate 358 is the Proton acceptor of the active site. Arginine 386 contacts pyrroloquinoline quinone. Residues 421 to 443 (GRPVENPGQRPAKPLPGETKGKP) form a disordered region. Tryptophan 531 and alanine 595 together coordinate pyrroloquinoline quinone.

It belongs to the bacterial PQQ dehydrogenase family. As to quaternary structure, homodimer. Interacts with cytochrome c550. The cofactor is pyrroloquinoline quinone. Ca(2+) serves as cofactor. The disulfide ring formed between the two adjacent cysteine residues Cys-147 and Cys-148 is essential for efficient electron transfer at pH 7 from PedE to its natural electron acceptor cytochrome c550.

It localises to the periplasm. The enzyme catalyses a primary alcohol + 2 Fe(III)-[cytochrome c] = an aldehyde + 2 Fe(II)-[cytochrome c] + 2 H(+). The catalysed reaction is ethanol + 2 Fe(III)-[cytochrome c] = acetaldehyde + 2 Fe(II)-[cytochrome c] + 2 H(+). It catalyses the reaction butan-1-ol + 2 Fe(III)-[cytochrome c] = butanal + 2 Fe(II)-[cytochrome c] + 2 H(+). It carries out the reaction butan-2-ol + 2 Fe(III)-[cytochrome c] = butan-2-one + 2 Fe(II)-[cytochrome c] + 2 H(+). The enzyme catalyses 2-phenylethanol + 2 Fe(III)-[cytochrome c] = 2-phenylacetaldehyde + 2 Fe(II)-[cytochrome c] + 2 H(+). The catalysed reaction is octan-1-ol + 2 Fe(III)-[cytochrome c] = octanal + 2 Fe(II)-[cytochrome c] + 2 H(+). It catalyses the reaction hexan-1-ol + 2 Fe(III)-[cytochrome c] = hexanal + 2 Fe(II)-[cytochrome c] + 2 H(+). It carries out the reaction cinnamyl alcohol + 2 Fe(III)-[cytochrome c] = cinnamaldehyde + 2 Fe(II)-[cytochrome c] + 2 H(+). The enzyme catalyses farnesol + 2 Fe(III)-[cytochrome c] = farnesal + 2 Fe(II)-[cytochrome c] + 2 H(+). The catalysed reaction is an aldehyde + 2 Fe(III)-[cytochrome c] + H2O = a carboxylate + 2 Fe(II)-[cytochrome c] + 3 H(+). It catalyses the reaction acetaldehyde + 2 Fe(III)-[cytochrome c] + H2O = 2 Fe(II)-[cytochrome c] + acetate + 3 H(+). It carries out the reaction butanal + 2 Fe(III)-[cytochrome c] + H2O = butanoate + 2 Fe(II)-[cytochrome c] + 3 H(+). The enzyme catalyses hexanal + 2 Fe(III)-[cytochrome c] + H2O = hexanoate + 2 Fe(II)-[cytochrome c] + 3 H(+). The catalysed reaction is octanal + 2 Fe(III)-[cytochrome c] + H2O = octanoate + 2 Fe(II)-[cytochrome c] + 3 H(+). Alcohol dehydrogenase that catalyzes the oxidation of a range of substrates, including linear and aromatic primary and secondary alcohols, as well as aldehydes, allowing bacterial growth with a variety of volatile organic compounds (VOCs) as carbon and energy sources. Uses a specific inducible cytochrome c550, encoded by the adjacent gene in the locus, as electron acceptor. This Pseudomonas putida (strain ATCC 47054 / DSM 6125 / CFBP 8728 / NCIMB 11950 / KT2440) protein is Quinoprotein alcohol dehydrogenase PedE.